The sequence spans 293 residues: 4-hydroxy-tetrahydrodipicolinate synthase (293 aa).

Position 45 (threonine 45) interacts with pyruvate. Catalysis depends on tyrosine 133, which acts as the Proton donor/acceptor. The active-site Schiff-base intermediate with substrate is lysine 161. Isoleucine 203 is a binding site for pyruvate.

It belongs to the DapA family. In terms of assembly, homotetramer; dimer of dimers.

The protein localises to the cytoplasm. It catalyses the reaction L-aspartate 4-semialdehyde + pyruvate = (2S,4S)-4-hydroxy-2,3,4,5-tetrahydrodipicolinate + H2O + H(+). The protein operates within amino-acid biosynthesis; L-lysine biosynthesis via DAP pathway; (S)-tetrahydrodipicolinate from L-aspartate: step 3/4. Functionally, catalyzes the condensation of (S)-aspartate-beta-semialdehyde [(S)-ASA] and pyruvate to 4-hydroxy-tetrahydrodipicolinate (HTPA). In Exiguobacterium sibiricum (strain DSM 17290 / CCUG 55495 / CIP 109462 / JCM 13490 / 255-15), this protein is 4-hydroxy-tetrahydrodipicolinate synthase.